The primary structure comprises 326 residues: Malate dehydrogenase (326 aa).

12-18 is an NAD(+) binding site; the sequence is GGTGQIA. Substrate contacts are provided by Arg93 and Arg99. NAD(+)-binding positions include Asn106, Gln113, and 130–132; that span reads VGN. Asn132 and Arg163 together coordinate substrate. His188 (proton acceptor) is an active-site residue.

Belongs to the LDH/MDH superfamily. MDH type 2 family.

It carries out the reaction (S)-malate + NAD(+) = oxaloacetate + NADH + H(+). Catalyzes the reversible oxidation of malate to oxaloacetate. The chain is Malate dehydrogenase from Chlamydia trachomatis serovar A (strain ATCC VR-571B / DSM 19440 / HAR-13).